Consider the following 130-residue polypeptide: uncharacterized protein (130 aa).

Positions 1–23 (MINRKVVYALSALLLFVYSYAFI) are cleaved as a signal peptide.

This is an uncharacterized protein from Aquifex aeolicus (strain VF5).